The chain runs to 81 residues: ATP synthase subunit c (81 aa).

Helical transmembrane passes span 14 to 34 and 60 to 80; these read YLGAGLAAIGCIGGGVGIGTV and LAFAEVTSLYALFVAIMLLFV.

This sequence belongs to the ATPase C chain family. F-type ATPases have 2 components, F(1) - the catalytic core - and F(0) - the membrane proton channel. F(1) has five subunits: alpha(3), beta(3), gamma(1), delta(1), epsilon(1). F(0) has three main subunits: a(1), b(2) and c(10-14). The alpha and beta chains form an alternating ring which encloses part of the gamma chain. F(1) is attached to F(0) by a central stalk formed by the gamma and epsilon chains, while a peripheral stalk is formed by the delta and b chains.

It is found in the cell membrane. F(1)F(0) ATP synthase produces ATP from ADP in the presence of a proton or sodium gradient. F-type ATPases consist of two structural domains, F(1) containing the extramembraneous catalytic core and F(0) containing the membrane proton channel, linked together by a central stalk and a peripheral stalk. During catalysis, ATP synthesis in the catalytic domain of F(1) is coupled via a rotary mechanism of the central stalk subunits to proton translocation. Its function is as follows. Key component of the F(0) channel; it plays a direct role in translocation across the membrane. A homomeric c-ring of between 10-14 subunits forms the central stalk rotor element with the F(1) delta and epsilon subunits. This is ATP synthase subunit c from Clostridium acetobutylicum (strain ATCC 824 / DSM 792 / JCM 1419 / IAM 19013 / LMG 5710 / NBRC 13948 / NRRL B-527 / VKM B-1787 / 2291 / W).